The following is a 95-amino-acid chain: Large ribosomal subunit protein uL23 (95 aa).

This sequence belongs to the universal ribosomal protein uL23 family. In terms of assembly, part of the 50S ribosomal subunit. Contacts protein L29, and trigger factor when it is bound to the ribosome.

Its function is as follows. One of the early assembly proteins it binds 23S rRNA. One of the proteins that surrounds the polypeptide exit tunnel on the outside of the ribosome. Forms the main docking site for trigger factor binding to the ribosome. This Desulfitobacterium hafniense (strain DSM 10664 / DCB-2) protein is Large ribosomal subunit protein uL23.